Here is a 295-residue protein sequence, read N- to C-terminus: UDP-N-acetylenolpyruvoylglucosamine reductase (295 aa).

An FAD-binding PCMH-type domain is found at 24–188 (KVGGNAEIFF…LKVVFKINKG (165 aa)). Arg168 is a catalytic residue. Ser217 (proton donor) is an active-site residue. Residue Glu287 is part of the active site.

The protein belongs to the MurB family. FAD is required as a cofactor.

The protein resides in the cytoplasm. The enzyme catalyses UDP-N-acetyl-alpha-D-muramate + NADP(+) = UDP-N-acetyl-3-O-(1-carboxyvinyl)-alpha-D-glucosamine + NADPH + H(+). Its pathway is cell wall biogenesis; peptidoglycan biosynthesis. Cell wall formation. This chain is UDP-N-acetylenolpyruvoylglucosamine reductase, found in Rickettsia peacockii (strain Rustic).